Consider the following 343-residue polypeptide: Ribosomal RNA small subunit methyltransferase C (343 aa).

This sequence belongs to the methyltransferase superfamily. RsmC family. Monomer.

The protein localises to the cytoplasm. It catalyses the reaction guanosine(1207) in 16S rRNA + S-adenosyl-L-methionine = N(2)-methylguanosine(1207) in 16S rRNA + S-adenosyl-L-homocysteine + H(+). Functionally, specifically methylates the guanine in position 1207 of 16S rRNA in the 30S particle. In Shigella sonnei (strain Ss046), this protein is Ribosomal RNA small subunit methyltransferase C.